Here is a 729-residue protein sequence, read N- to C-terminus: Cytoplasmic polyadenylation element-binding protein 4 (729 aa).

Disordered regions lie at residues 20–49 (FPVR…NNNT) and 78–133 (EKAK…KEKI). Positions 24–35 (FHPHLQPPHHHQ) are enriched in basic residues. Over residues 83-96 (QQQEQQDPLEKQQL) the composition is skewed to low complexity. Phosphoserine occurs at positions 97, 99, and 137. Positions 218-328 (FGGSFSPQIG…RGLNGGITPL (111 aa)) are disordered. Positions 232 to 249 (HHPHHPHFQHHHSQHQQQ) are enriched in basic residues. A phosphoserine mark is found at Ser252 and Ser255. Low complexity predominate over residues 285-300 (WSSYQSPSPTPSSSWS). The span at 301–313 (PGGGGYGGWGGSQ) shows a compositional bias: gly residues. Phosphothreonine is present on Thr326. Phosphoserine is present on residues Ser330 and Ser332. 2 RRM domains span residues 472–563 (RKVF…PWNL) and 580–662 (KTIF…PYVL). Residues 541 to 543 (KLY) form an RNA-binding region. Cys667, Cys675, Cys684, Cys689, Cys694, Cys697, His702, and His710 together coordinate Zn(2+).

The protein belongs to the RRM CPEB family. Interacts with TOB1. In terms of tissue distribution, expressed in pancreas in islets and ductal cells (at protein level). Expressed in melanocytes.

It localises to the cytoplasm. It is found in the cell projection. Its subcellular location is the dendrite. The protein resides in the dendritic spine. The protein localises to the postsynaptic density. It localises to the axon. It is found in the growth cone. Its subcellular location is the endoplasmic reticulum. The protein resides in the perinuclear region. Sequence-specific RNA-binding protein that binds to the cytoplasmic polyadenylation element (CPE), an uridine-rich sequence element (consensus sequence 5'-UUUUUAU-3') within the mRNA 3'-UTR. RNA binding results in a clear conformational change analogous to the Venus fly trap mechanism. Regulates activation of unfolded protein response (UPR) in the process of adaptation to ER stress in liver, by maintaining translation of CPE-regulated mRNAs in conditions in which global protein synthesis is inhibited. Required for cell cycle progression, specifically for cytokinesis and chromosomal segregation. Plays a role as an oncogene promoting tumor growth and progression by positively regulating translation of t-plasminogen activator/PLAT. Stimulates proliferation of melanocytes. In contrast to CPEB1 and CPEB3, does not play role in synaptic plasticity, learning and memory. The polypeptide is Cytoplasmic polyadenylation element-binding protein 4 (CPEB4) (Homo sapiens (Human)).